The chain runs to 38 residues: Plastocyanin (38 aa).

A Plastocyanin-like domain is found at 1–38 (AQTVEVKMGADGGLLVFEPAKAGPHNVVFDEDNIPPGV). Cu cation is bound at residue H25.

This sequence belongs to the plastocyanin family. Requires Cu(2+) as cofactor.

Its subcellular location is the plastid. It is found in the chloroplast thylakoid membrane. Participates in electron transfer between P700 and the cytochrome b6-f complex in photosystem I. The protein is Plastocyanin (PETE) of Thalassiosira oceanica (Marine diatom).